We begin with the raw amino-acid sequence, 109 residues long: Aquaporin-2 (109 aa).

At 1 to 6 (SIAFSR) the chain is on the cytoplasmic side. A helical membrane pass occupies residues 7-27 (AVLSEFLATLLFVFFGLGSAL). The Extracellular segment spans residues 28–35 (NWPQALPS). The helical transmembrane segment at 36 to 54 (VLQIAMAFGLAIGTLVQTL) threads the bilayer. The Cytoplasmic portion of the chain corresponds to 55-59 (GHISG). An intramembrane region (discontinuously helical) is located at residues 60-69 (AHINPAVTIA). Residues 63 to 65 (NPA) carry the NPA 1 motif. The Cytoplasmic segment spans residues 70-80 (CLVGCHVSFLR). A helical membrane pass occupies residues 81-102 (ALFYLAAQLLGAVAGAALLHEL). The Extracellular segment spans residues 103-109 (TPPDIRG).

Belongs to the MIP/aquaporin (TC 1.A.8) family. Homotetramer. In terms of processing, serine phosphorylation is necessary and sufficient for expression at the apical membrane. Endocytosis is not phosphorylation-dependent. N-glycosylated.

The protein resides in the apical cell membrane. It localises to the basolateral cell membrane. Its subcellular location is the cell membrane. It is found in the cytoplasmic vesicle membrane. The protein localises to the golgi apparatus. The protein resides in the trans-Golgi network membrane. The enzyme catalyses H2O(in) = H2O(out). The catalysed reaction is glycerol(in) = glycerol(out). Forms a water-specific channel that provides the plasma membranes of renal collecting duct with high permeability to water, thereby permitting water to move in the direction of an osmotic gradient. Plays an essential role in renal water homeostasis. Could also be permeable to glycerol. This is Aquaporin-2 from Procavia capensis habessinica (Abyssinian hyrax).